Reading from the N-terminus, the 224-residue chain is UPF0758 protein BLi02933/BL00636 (224 aa).

The region spanning 102–224 is the MPN domain; it reads VIRFPEDAAN…FVSLKEKGYL (123 aa). Residues histidine 173, histidine 175, and aspartate 186 each coordinate Zn(2+). Residues 173 to 186 carry the JAMM motif motif; sequence HNHPSGDPAPSRED.

It belongs to the UPF0758 family.

This chain is UPF0758 protein BLi02933/BL00636, found in Bacillus licheniformis (strain ATCC 14580 / DSM 13 / JCM 2505 / CCUG 7422 / NBRC 12200 / NCIMB 9375 / NCTC 10341 / NRRL NRS-1264 / Gibson 46).